Here is a 46-residue protein sequence, read N- to C-terminus: Short transmembrane mitochondrial protein 1 (46 aa).

Residues 7–23 (GFTLGNVVGMYLAQNYE) traverse the membrane as a helical segment.

Belongs to the STMP1 family. As to expression, widely expressed. Expressed more abundantly in brain compared with other tissues such as heart, muscle and liver.

The protein localises to the mitochondrion inner membrane. It is found in the mitochondrion outer membrane. It localises to the mitochondrion intermembrane space. Functionally, microprotein involved in mitochondrial respiratory chain complex III (ubiquinol-cytochrome c oxidoreductase) and complex IV (mitochondrial cytochrome c oxidase complex) assembly. Required for the formation of mitochondrial supercomplexes (SCs). Also required for the activation of the NLRP3 inflammasome. This Danio rerio (Zebrafish) protein is Short transmembrane mitochondrial protein 1.